The primary structure comprises 129 residues: Transcription antitermination protein NusB (129 aa).

This sequence belongs to the NusB family.

Involved in transcription antitermination. Required for transcription of ribosomal RNA (rRNA) genes. Binds specifically to the boxA antiterminator sequence of the ribosomal RNA (rrn) operons. The chain is Transcription antitermination protein NusB from Staphylococcus aureus (strain USA300 / TCH1516).